The chain runs to 264 residues: uncharacterized protein (264 aa).

The N-terminal stretch at 1 to 26 (MMKKLFHSTLIVLLFFSFFGVQPIHA) is a signal peptide.

This is an uncharacterized protein from Bacillus subtilis (strain 168).